A 255-amino-acid polypeptide reads, in one-letter code: Aliphatic sulfonates import ATP-binding protein SsuB (255 aa).

The ABC transporter domain maps to 12-233 (LLLNAVSKHY…RLGSVRLAEL (222 aa)). Position 44–51 (44–51 (GRSGGGKS)) interacts with ATP.

The protein belongs to the ABC transporter superfamily. Aliphatic sulfonates importer (TC 3.A.1.17.2) family. As to quaternary structure, the complex is composed of two ATP-binding proteins (SsuB), two transmembrane proteins (SsuC) and a solute-binding protein (SsuA).

Its subcellular location is the cell inner membrane. The catalysed reaction is ATP + H2O + aliphatic sulfonate-[sulfonate-binding protein]Side 1 = ADP + phosphate + aliphatic sulfonateSide 2 + [sulfonate-binding protein]Side 1.. In terms of biological role, part of the ABC transporter complex SsuABC involved in aliphatic sulfonates import. Responsible for energy coupling to the transport system. This chain is Aliphatic sulfonates import ATP-binding protein SsuB, found in Shigella flexneri serotype 5b (strain 8401).